Here is a 152-residue protein sequence, read N- to C-terminus: Acidic phospholipase A2 1 (152 aa).

A signal peptide spans 1–19 (MNPAYFLVLAAVCVSLLGA). A propeptide spanning residues 20 to 27 (ANIPPQPL) is cleaved from the precursor. 7 disulfide bridges follow: Cys38/Cys104, Cys54/Cys151, Cys56/Cys72, Cys71/Cys132, Cys78/Cys125, Cys88/Cys118, and Cys111/Cys123. Residues Tyr55, Gly57, and Gly59 each contribute to the Ca(2+) site. His75 is an active-site residue. Asp76 provides a ligand contact to Ca(2+). The active site involves Asp126.

The protein belongs to the phospholipase A2 family. Group I subfamily. D49 sub-subfamily. Ca(2+) is required as a cofactor. As to expression, expressed by the venom gland.

The protein resides in the secreted. The catalysed reaction is a 1,2-diacyl-sn-glycero-3-phosphocholine + H2O = a 1-acyl-sn-glycero-3-phosphocholine + a fatty acid + H(+). Functionally, PLA2 catalyzes the calcium-dependent hydrolysis of the 2-acyl groups in 3-sn-phosphoglycerides. The protein is Acidic phospholipase A2 1 of Bungarus candidus (Malayan krait).